Reading from the N-terminus, the 830-residue chain is Heavy metal tolerance protein (830 aa).

Residues 1-27 (MVLRYNSPRLNILELVLLYVGFFSIGS) form the signal peptide. 3 helical membrane passes run 51 to 71 (PIGI…VDIS), 88 to 108 (TTVV…ISCA), and 126 to 146 (LSVL…IVYS). Asn-150 carries N-linked (GlcNAc...) asparagine glycosylation. A run of 3 helical transmembrane segments spans residues 156–176 (IVLA…AIYL), 263–283 (FQIF…ILAP), and 304–324 (DVIL…IGSL). One can recognise an ABC transmembrane type-1 domain in the interval 265–550 (IFICIVLLFL…FGTLYRSLQN (286 aa)). A glycan (N-linked (GlcNAc...) asparagine) is linked at Asn-350. A run of 2 helical transmembrane segments spans residues 381 to 401 (VVFQ…YFFI) and 403 to 423 (FDIY…YVTV). Glutathione is bound by residues 429–433 (RTEAR), 492–495 (NIVQ), and Gly-542. Residues 490-511 (FLNIVQGGIFTFSLAIACLLSA) form a helical membrane-spanning segment. Positions 584 to 818 (VIFSHVSFAY…DGGAYKKMWF (235 aa)) constitute an ABC transporter domain. ATP is bound by residues Tyr-593 and 617–628 (GESGGGKSTIMR).

The protein belongs to the ABC transporter superfamily. ABCB family. Heavy Metal importer (TC 3.A.1.210) subfamily.

The protein localises to the vacuole membrane. In terms of biological role, involved in metal tolerance. Probably involved in the transport of metal-bound phytochelatins. Compartmentalizes cadmium within vacuoles, thereby protecting cells from cadmium toxicity. The chain is Heavy metal tolerance protein (hmt1) from Schizosaccharomyces pombe (strain 972 / ATCC 24843) (Fission yeast).